The chain runs to 830 residues: Phenylalanine--tRNA ligase beta subunit (830 aa).

Positions 39-158 (GQSLDGVVVG…DDTPVGTPFP (120 aa)) constitute a tRNA-binding domain. A B5 domain is found at 417-492 (PAEKTIALRP…RLHGYDQIPE (76 aa)). Residues D470, D476, E479, and E480 each contribute to the Mg(2+) site. A disordered region spans residues 490-510 (IPEPERVPVPSRTPEQPPEET). Positions 736-828 (SRFPVVDRDL…LAENHGARLR (93 aa)) constitute an FDX-ACB domain.

It belongs to the phenylalanyl-tRNA synthetase beta subunit family. Type 1 subfamily. As to quaternary structure, tetramer of two alpha and two beta subunits. Requires Mg(2+) as cofactor.

Its subcellular location is the cytoplasm. The enzyme catalyses tRNA(Phe) + L-phenylalanine + ATP = L-phenylalanyl-tRNA(Phe) + AMP + diphosphate + H(+). The sequence is that of Phenylalanine--tRNA ligase beta subunit from Salinibacter ruber (strain DSM 13855 / M31).